A 190-amino-acid chain; its full sequence is Xanthine phosphoribosyltransferase 1 (190 aa).

The xanthine site is built by Leu20 and Asn27. Residue 128–132 coordinates 5-phospho-alpha-D-ribose 1-diphosphate; that stretch reads ANGEA. Lys156 lines the xanthine pocket.

This sequence belongs to the purine/pyrimidine phosphoribosyltransferase family. Xpt subfamily. Homodimer.

The protein resides in the cytoplasm. It carries out the reaction XMP + diphosphate = xanthine + 5-phospho-alpha-D-ribose 1-diphosphate. The protein operates within purine metabolism; XMP biosynthesis via salvage pathway; XMP from xanthine: step 1/1. In terms of biological role, converts the preformed base xanthine, a product of nucleic acid breakdown, to xanthosine 5'-monophosphate (XMP), so it can be reused for RNA or DNA synthesis. The sequence is that of Xanthine phosphoribosyltransferase 1 from Clostridium botulinum (strain ATCC 19397 / Type A).